The sequence spans 1047 residues: Ribonucleoside-diphosphate reductase subunit alpha (1047 aa).

ATP-cone domains follow at residues 9 to 111, 118 to 219, and 237 to 327; these read CTIV…KAHR, LSVV…ARVR, and VEVL…EALG. Substrate contacts are provided by residues T442, 457-458, G486, 670-674, and 857-861; these read SC, NLCTE, and PTATI. A disulfide bond links C458 and C687. N670 (proton acceptor) is an active-site residue. C672 functions as the Cysteine radical intermediate in the catalytic mechanism. E674 (proton acceptor) is an active-site residue.

The protein belongs to the ribonucleoside diphosphate reductase large chain family. In terms of assembly, tetramer of two alpha and two beta subunits.

It carries out the reaction a 2'-deoxyribonucleoside 5'-diphosphate + [thioredoxin]-disulfide + H2O = a ribonucleoside 5'-diphosphate + [thioredoxin]-dithiol. With respect to regulation, under complex allosteric control mediated by deoxynucleoside triphosphates and ATP binding. The type of nucleotide bound at the specificity site determines substrate preference. It seems probable that ATP makes the enzyme reduce CDP and UDP, dGTP favors ADP reduction and dTTP favors GDP reduction. Its function is as follows. Provides the precursors necessary for DNA synthesis. Catalyzes the biosynthesis of deoxyribonucleotides from the corresponding ribonucleotides. The sequence is that of Ribonucleoside-diphosphate reductase subunit alpha (nrdA) from Chlamydia trachomatis serovar D (strain ATCC VR-885 / DSM 19411 / UW-3/Cx).